The primary structure comprises 531 residues: Probable peptide ABC transporter periplasmic-binding protein y4tO (531 aa).

A signal peptide (tat-type signal) is located at residues 1 to 32; it reads MTISRRDLFKAGLAAGAALSVPSLLRAQTAVA.

Belongs to the bacterial solute-binding protein 5 family. Post-translationally, predicted to be exported by the Tat system. The position of the signal peptide cleavage has not been experimentally proven.

The protein resides in the periplasm. Probably part of the binding-protein-dependent transport system y4tOPQRS for a peptide. The protein is Probable peptide ABC transporter periplasmic-binding protein y4tO of Sinorhizobium fredii (strain NBRC 101917 / NGR234).